We begin with the raw amino-acid sequence, 293 residues long: Formamidopyrimidine-DNA glycosylase (293 aa).

Pro-2 serves as the catalytic Schiff-base intermediate with DNA. Glu-3 (proton donor) is an active-site residue. Lys-58 acts as the Proton donor; for beta-elimination activity in catalysis. DNA-binding residues include His-104, Arg-127, and Arg-170. The FPG-type zinc finger occupies 257–293 (SVYGREGKPCRNPACGGTVERVVQSGRSTFFCASCQT). Arg-283 acts as the Proton donor; for delta-elimination activity in catalysis.

It belongs to the FPG family. As to quaternary structure, monomer. The cofactor is Zn(2+).

It catalyses the reaction Hydrolysis of DNA containing ring-opened 7-methylguanine residues, releasing 2,6-diamino-4-hydroxy-5-(N-methyl)formamidopyrimidine.. The enzyme catalyses 2'-deoxyribonucleotide-(2'-deoxyribose 5'-phosphate)-2'-deoxyribonucleotide-DNA = a 3'-end 2'-deoxyribonucleotide-(2,3-dehydro-2,3-deoxyribose 5'-phosphate)-DNA + a 5'-end 5'-phospho-2'-deoxyribonucleoside-DNA + H(+). In terms of biological role, involved in base excision repair of DNA damaged by oxidation or by mutagenic agents. Acts as a DNA glycosylase that recognizes and removes damaged bases. Has a preference for oxidized purines, such as 7,8-dihydro-8-oxoguanine (8-oxoG). Has AP (apurinic/apyrimidinic) lyase activity and introduces nicks in the DNA strand. Cleaves the DNA backbone by beta-delta elimination to generate a single-strand break at the site of the removed base with both 3'- and 5'-phosphates. The polypeptide is Formamidopyrimidine-DNA glycosylase (Brucella canis (strain ATCC 23365 / NCTC 10854 / RM-666)).